Consider the following 1234-residue polypeptide: Coiled-coil domain-containing protein CG32809 (1234 aa).

Residues 1-11 (MLIRWKSKDKS) are compositionally biased toward basic and acidic residues. Disordered stretches follow at residues 1–88 (MLIR…HAHQ), 107–129 (KNKKNQPMRGYAPVNQGPLFDDD), and 330–350 (KVSMDGYTSSPERSSRGNYEE). Over residues 12–25 (ASSNQSVGGSSSSS) the composition is skewed to low complexity. Over residues 55-69 (GDERRRAMRRDDPRR) the composition is skewed to basic and acidic residues. Residues 412 to 436 (HRIRVEHMERQLANLTGLVQKALVN) are a coiled coil. Residues 498 to 548 (DIQGIPKSHNPLHAAETKPTKPAIKSSTLPRTSSQERDRLKPPPPPKPIVL) form a disordered region. 2 coiled-coil regions span residues 565 to 594 (EVYNHLRGLQKKAKDLRMEVRTLRRLSQAQ) and 630 to 666 (TRISREEELYKQEVIRLEKDLSDLEGSVENLRGEVIN). Disordered stretches follow at residues 754–793 (EQRLPPNEPTISEETPRSADISAPDKPIPTPRMGSFALSG), 815–852 (IAQQQQQQQQQQQQQQQQHQHQQLYEIRPEDSASDESA), 928–1011 (LHSY…PPNQ), and 1028–1070 (SANA…ESGN). 5 stretches are compositionally biased toward low complexity: residues 817–837 (QQQQQQQQQQQQQQQQHQHQQ), 952–965 (TSSSTSLANGGSSS), 993–1004 (TSSRSPLASPTS), 1028–1039 (SANANANANSNA), and 1046–1068 (VGETTSVVSGDTSSGDNSSGNES). The stretch at 1077 to 1105 (VALEMRHQELLKKQKMLQEQYQRLQQMSK) forms a coiled coil.

The protein is Coiled-coil domain-containing protein CG32809 of Drosophila melanogaster (Fruit fly).